The primary structure comprises 121 residues: MIQRQTYLNVADNSGAKKVQVIGIPYAPRKYATLRDVVTVTVKEALPQGNAKKGKIYRAIIVRTAKEVRRPDGSYIKFDDNACVLLNQYGEPLGTRVLGPIAREVRNKGFTKIASLAPEVV.

This sequence belongs to the universal ribosomal protein uL14 family. Part of the 50S ribosomal subunit. Forms a cluster with proteins L3 and L19. In the 70S ribosome, L14 and L19 interact and together make contacts with the 16S rRNA in bridges B5 and B8.

In terms of biological role, binds to 23S rRNA. Forms part of two intersubunit bridges in the 70S ribosome. This chain is Large ribosomal subunit protein uL14, found in Aquifex pyrophilus.